The primary structure comprises 232 residues: tRNA (guanine-N(1)-)-methyltransferase (232 aa).

Residues Gly-108 and 128 to 133 (IGDFIM) each bind S-adenosyl-L-methionine.

The protein belongs to the RNA methyltransferase TrmD family. Homodimer.

The protein localises to the cytoplasm. It catalyses the reaction guanosine(37) in tRNA + S-adenosyl-L-methionine = N(1)-methylguanosine(37) in tRNA + S-adenosyl-L-homocysteine + H(+). Its function is as follows. Specifically methylates guanosine-37 in various tRNAs. In Campylobacter fetus subsp. fetus (strain 82-40), this protein is tRNA (guanine-N(1)-)-methyltransferase.